Here is a 1024-residue protein sequence, read N- to C-terminus: Beta-galactosidase (1024 aa).

2 residues coordinate substrate: N103 and D202. Position 202 (D202) interacts with Na(+). Residues E417, H419, and E462 each coordinate Mg(2+). Residues E462 and 538-541 (EYAH) contribute to the substrate site. The active-site Proton donor is E462. E538 functions as the Nucleophile in the catalytic mechanism. Mg(2+) is bound at residue N598. The Na(+) site is built by F602 and N605. Positions 605 and 1000 each coordinate substrate.

Belongs to the glycosyl hydrolase 2 family. Homotetramer. It depends on Mg(2+) as a cofactor. Requires Na(+) as cofactor.

It catalyses the reaction Hydrolysis of terminal non-reducing beta-D-galactose residues in beta-D-galactosides.. The protein is Beta-galactosidase of Shigella dysenteriae serotype 1 (strain Sd197).